The sequence spans 81 residues: Keratin-associated protein 19-3 (81 aa).

Belongs to the KRTAP type 19 family. In terms of assembly, interacts with hair keratins.

In terms of biological role, in the hair cortex, hair keratin intermediate filaments are embedded in an interfilamentous matrix, consisting of hair keratin-associated proteins (KRTAP), which are essential for the formation of a rigid and resistant hair shaft through their extensive disulfide bond cross-linking with abundant cysteine residues of hair keratins. The matrix proteins include the high-sulfur and high-glycine-tyrosine keratins. The protein is Keratin-associated protein 19-3 (KRTAP19-3) of Homo sapiens (Human).